A 239-amino-acid polypeptide reads, in one-letter code: Geranylgeranylglyceryl phosphate synthase (239 aa).

Mg(2+) is bound by residues D18 and S45. Sn-glycerol 1-phosphate is bound by residues 166 to 172 (YLEAGSG), 197 to 198 (GG), and 219 to 220 (GT).

It belongs to the GGGP/HepGP synthase family. Group II subfamily. Mg(2+) serves as cofactor.

It is found in the cytoplasm. The catalysed reaction is sn-glycerol 1-phosphate + (2E,6E,10E)-geranylgeranyl diphosphate = sn-3-O-(geranylgeranyl)glycerol 1-phosphate + diphosphate. It functions in the pathway membrane lipid metabolism; glycerophospholipid metabolism. Its function is as follows. Prenyltransferase that catalyzes the transfer of the geranylgeranyl moiety of geranylgeranyl diphosphate (GGPP) to the C3 hydroxyl of sn-glycerol-1-phosphate (G1P). This reaction is the first ether-bond-formation step in the biosynthesis of archaeal membrane lipids. In Pyrobaculum aerophilum (strain ATCC 51768 / DSM 7523 / JCM 9630 / CIP 104966 / NBRC 100827 / IM2), this protein is Geranylgeranylglyceryl phosphate synthase.